A 592-amino-acid polypeptide reads, in one-letter code: ATP-dependent lipid A-core flippase (592 aa).

6 helical membrane passes run 31–51, 76–96, 134–154, 161–181, 261–281, and 288–308; these read LSSFILAMVAMGVVAATEGII, AMLVGIAVVRGVAQFGATYFL, AVIFEVNQVLQVLTGVFITLV, LALLIFLFYTNWRLTLVVAVI, VTQFLAALALSVILAIAMVQA, and VGGFTGFVMAMLLLISPLKHL. Residues 35–317 enclose the ABC transmembrane type-1 domain; it reads ILAMVAMGVV…LTDVNQPMQR (283 aa). An ABC transporter domain is found at 349-587; that stretch reads LRFEHVTFRY…DGLYAGLHRI (239 aa). 383-390 provides a ligand contact to ATP; it reads GPSGSGKT.

This sequence belongs to the ABC transporter superfamily. Lipid exporter (TC 3.A.1.106) family. Homodimer.

It localises to the cell inner membrane. It carries out the reaction ATP + H2O + lipid A-core oligosaccharideSide 1 = ADP + phosphate + lipid A-core oligosaccharideSide 2.. In terms of biological role, involved in lipopolysaccharide (LPS) biosynthesis. Translocates lipid A-core from the inner to the outer leaflet of the inner membrane. Transmembrane domains (TMD) form a pore in the inner membrane and the ATP-binding domain (NBD) is responsible for energy generation. The sequence is that of ATP-dependent lipid A-core flippase from Ralstonia nicotianae (strain ATCC BAA-1114 / GMI1000) (Ralstonia solanacearum).